Reading from the N-terminus, the 235-residue chain is NAD-dependent protein deacylase (235 aa).

Residues 1–235 (MDLRLFKNIV…VPRFITQFLE (235 aa)) form the Deacetylase sirtuin-type domain. An NAD(+)-binding site is contributed by 14 to 33 (GAGISAESGIRTFRDQDGLW). Substrate contacts are provided by tyrosine 58 and arginine 61. 95 to 98 (QNVD) lines the NAD(+) pocket. Histidine 113 (proton acceptor) is an active-site residue. Residues cysteine 121, cysteine 124, cysteine 140, and cysteine 143 each contribute to the Zn(2+) site. NAD(+)-binding positions include 180–182 (GTS), 204–206 (NLK), and alanine 222.

The protein belongs to the sirtuin family. Class III subfamily. It depends on Zn(2+) as a cofactor.

The protein resides in the cytoplasm. It catalyses the reaction N(6)-acetyl-L-lysyl-[protein] + NAD(+) + H2O = 2''-O-acetyl-ADP-D-ribose + nicotinamide + L-lysyl-[protein]. It carries out the reaction N(6)-succinyl-L-lysyl-[protein] + NAD(+) + H2O = 2''-O-succinyl-ADP-D-ribose + nicotinamide + L-lysyl-[protein]. In terms of biological role, NAD-dependent lysine deacetylase and desuccinylase that specifically removes acetyl and succinyl groups on target proteins. Modulates the activities of several proteins which are inactive in their acylated form. This chain is NAD-dependent protein deacylase, found in Bdellovibrio bacteriovorus (strain ATCC 15356 / DSM 50701 / NCIMB 9529 / HD100).